The primary structure comprises 422 residues: L-threonine dehydratase biosynthetic IlvA (422 aa).

K56 carries the post-translational modification N6-(pyridoxal phosphate)lysine. Pyridoxal 5'-phosphate is bound by residues N83, 189–193, and S315; that span reads GGGGL. An ACT-like domain is found at 339 to 413; it reads HYFILNFPQR…FDPSNIYINE (75 aa).

This sequence belongs to the serine/threonine dehydratase family. As to quaternary structure, homotetramer. The cofactor is pyridoxal 5'-phosphate.

The enzyme catalyses L-threonine = 2-oxobutanoate + NH4(+). The protein operates within amino-acid biosynthesis; L-isoleucine biosynthesis; 2-oxobutanoate from L-threonine: step 1/1. Its function is as follows. Catalyzes the anaerobic formation of alpha-ketobutyrate and ammonia from threonine in a two-step reaction. The first step involved a dehydration of threonine and a production of enamine intermediates (aminocrotonate), which tautomerizes to its imine form (iminobutyrate). Both intermediates are unstable and short-lived. The second step is the nonenzymatic hydrolysis of the enamine/imine intermediates to form 2-ketobutyrate and free ammonia. In the low water environment of the cell, the second step is accelerated by RidA. This chain is L-threonine dehydratase biosynthetic IlvA (ilvA), found in Staphylococcus aureus (strain NCTC 8325 / PS 47).